The primary structure comprises 403 residues: Presqualene diphosphate synthase (403 aa).

Positions 84, 87, and 88 each coordinate Mg(2+).

It belongs to the phytoene/squalene synthase family. Mg(2+) serves as cofactor.

The catalysed reaction is 2 (2E,6E)-farnesyl diphosphate = presqualene diphosphate + diphosphate. Functionally, catalyzes the biosynthesis of presqualene diphosphate (PSPP). Works in combination with SSL-2 or SSL-3 to produce respectively squalene or botryococcene. In most other species, farnesyl diphosphate (FPP) is converted into squalene in a two-step reaction by a single enzyme. The polypeptide is Presqualene diphosphate synthase (SSL-1) (Botryococcus braunii (Green alga)).